The sequence spans 57 residues: Granulin-2 (57 aa).

2 disulfides stabilise this stretch: Cys4–Cys16 and Cys10–Cys26.

Belongs to the granulin family. Post-translationally, granulins are disulfide bridged. In terms of tissue distribution, ubiquitous.

The protein localises to the secreted. In terms of biological role, granulins have possible cytokine-like activity. They may play a role in inflammation, wound repair, and tissue remodeling. This chain is Granulin-2, found in Cyprinus carpio (Common carp).